We begin with the raw amino-acid sequence, 559 residues long: Nicotinate phosphoribosyltransferase 1 (559 aa).

Y33 and T221 together coordinate nicotinate. H224 carries the post-translational modification Phosphohistidine. Residue R331 participates in nicotinate binding. Residue T393 participates in 5-phospho-alpha-D-ribose 1-diphosphate binding.

The protein belongs to the NAPRTase family. Mg(2+) serves as cofactor. The cofactor is Mn(2+). In terms of processing, transiently phosphorylated on a His residue during the reaction cycle. Phosphorylation strongly increases the affinity for substrates and increases the rate of nicotinate D-ribonucleotide production. Dephosphorylation regenerates the low-affinity form of the enzyme, leading to product release.

It catalyses the reaction nicotinate + 5-phospho-alpha-D-ribose 1-diphosphate + ATP + H2O = nicotinate beta-D-ribonucleotide + ADP + phosphate + diphosphate. Its pathway is cofactor biosynthesis; NAD(+) biosynthesis; nicotinate D-ribonucleotide from nicotinate: step 1/1. Its function is as follows. Catalyzes the first step in the biosynthesis of NAD from nicotinic acid, the ATP-dependent synthesis of beta-nicotinate D-ribonucleotide from nicotinate and 5-phospho-D-ribose 1-phosphate. Helps prevent cellular oxidative stress via its role in NAD biosynthesis. This chain is Nicotinate phosphoribosyltransferase 1, found in Arabidopsis thaliana (Mouse-ear cress).